Reading from the N-terminus, the 653-residue chain is Sodium-dependent phosphate transporter 2 (653 aa).

At 1–5 (MVLDE) the chain is on the extracellular side. The chain crosses the membrane as a helical span at residues 6–26 (YMWMVIVGFIIAFVLAFSVGA). Residues 27-46 (NDVANSFGTAVGSGVVTLRQ) lie on the Cytoplasmic side of the membrane. A helical membrane pass occupies residues 47 to 67 (ACILASIFETIGSVLLGAKVG). Residues 68–86 (ETIRKGIIDVNLYNNTVDL) are Extracellular-facing. An N-linked (GlcNAc...) asparagine glycan is attached at Asn81. A helical transmembrane segment spans residues 87–107 (LMAGEVSAMVGSAVWQLIASF). Residues 108-109 (LK) are Cytoplasmic-facing. A helical transmembrane segment spans residues 110-130 (LPVSGTHCIVGATIGFSLVAV). Over 131–142 (GAHSVQWMQLVK) the chain is Extracellular. A helical membrane pass occupies residues 143-163 (IVASWFISPLLSGLMSGALFL). The Cytoplasmic portion of the chain corresponds to 164–187 (MIKFFILNKEDPVPNGLKALPVFY). Residues 188–208 (AATIGINVFSILFTGAPLLGL) traverse the membrane as a helical segment. Topologically, residues 209–217 (QTFPVWATA) are extracellular. The helical transmembrane segment at 218-238 (LLSVGIAIVFALVVWFFVCPW) threads the bilayer. Residues 239–483 (MKKKIASRLK…EDKEEKDKSQ (245 aa)) are Cytoplasmic-facing. The interval 275–310 (LPGAKGNDESVLPLTSSSPDAAVSSESVSNGNTRVP) is disordered. A compositionally biased stretch (low complexity) spans 290 to 303 (SSSPDAAVSSESVS). A helical transmembrane segment spans residues 484-504 (VHLLFHFLQILTACFGSFAHG). Residues 505 to 532 (GNDVSNAIGPLVALWLIYQQGGVMQEAS) lie on the Extracellular side of the membrane. Residues 533-553 (TPVWLLLYGGVGICAGLWVWG) form a helical membrane-spanning segment. Residues 554–572 (RRVIQTMGKDLTPITPSSG) lie on the Cytoplasmic side of the membrane. Residues 573-587 (FTIELASAFTVVVAS) form a helical membrane-spanning segment. Topologically, residues 588-594 (NIGLPIS) are extracellular. The chain crosses the membrane as a helical span at residues 595 to 610 (TTHCKVGSVVAVGWIR). The Cytoplasmic portion of the chain corresponds to 611–622 (SRKAVDWRLFRN). The helical transmembrane segment at 623 to 643 (IFLAWFVTVPVAGLFSAGVMA) threads the bilayer. The Extracellular segment spans residues 644 to 653 (ILQYGILPYV).

It belongs to the inorganic phosphate transporter (PiT) (TC 2.A.20) family. Homodimer.

It is found in the cell membrane. It localises to the apical cell membrane. The catalysed reaction is 2 Na(+)(out) + phosphate(out) = 2 Na(+)(in) + phosphate(in). Sodium-phosphate symporter which preferentially transports the monovalent form of phosphate with a stoichiometry of two sodium ions per phosphate ion. In Xenopus laevis (African clawed frog), this protein is Sodium-dependent phosphate transporter 2 (slc20a2).